A 494-amino-acid polypeptide reads, in one-letter code: UPF0371 protein STER_1332 (494 aa).

The protein belongs to the UPF0371 family.

The protein is UPF0371 protein STER_1332 of Streptococcus thermophilus (strain ATCC BAA-491 / LMD-9).